A 509-amino-acid chain; its full sequence is Protein Jade-1 (509 aa).

Positions 1–45 (MKRGRLPSSSEDSDDNGSLSTTWSQNSRSQHRRSSCSRPEDRKPS) are disordered. The segment at 60-80 (DSYQLNPDEYYVLADPWRQEW) is interaction with KAT7/HBO1 and histones. The segment at 80 to 188 (WEKGVQVPVS…EQRCYDNMNH (109 aa)) is interaction with histones. Serine 89 is modified (phosphoserine). At threonine 92 the chain carries Phosphothreonine. A Glycyl lysine isopeptide (Lys-Gly) (interchain with G-Cter in SUMO2) cross-link involves residue lysine 114. A PHD-type 1 zinc finger spans residues 203-253 (YVVCDVCQSPDGEDGNEMVFCDKCNICVHQACYGILKVPEGSWLCRTCALG). The segment at 255-289 (QPKCLLCPKKGGAMKPTRSGTKWVHVSCALWIPEV) adopts a C2HC pre-PHD-type zinc-finger fold. The PHD-type 2 zinc-finger motif lies at 313-369 (LVCSLCNEKFGASIQCSVKNCRTAFHVTCAFDRGLEMKTILAENDEVKFKSYCPKHS). The tract at residues 373–399 (KAEEGLGEGTAQENGAPECSPRDPLEP) is disordered.

Belongs to the JADE family. In terms of assembly, component of the HBO1 complex composed at least of ING4 or ING5, KAT7/HBO1, MEAF6, and one of JADE1, JADE2 and JADE3. Interacts with NPHP4.

The protein resides in the nucleus. It is found in the chromosome. Its subcellular location is the cytoplasm. It localises to the cytoskeleton. The protein localises to the cilium basal body. Its function is as follows. Scaffold subunit of some HBO1 complexes, which have a histone H4 acetyltransferase activity. Plays a key role in HBO1 complex by directing KAT7/HBO1 specificity towards histone H4 acetylation (H4K5ac, H4K8ac and H4K12ac), regulating DNA replication initiation, regulating DNA replication initiation. May also promote acetylation of nucleosomal histone H4 by KAT5. Promotes apoptosis. May act as a renal tumor suppressor. Negatively regulates canonical Wnt signaling; at least in part, cooperates with NPHP4 in this function. The polypeptide is Protein Jade-1 (JADE1) (Bos taurus (Bovine)).